Consider the following 262-residue polypeptide: ATP synthase subunit a (262 aa).

A run of 6 helical transmembrane segments spans residues 50–70, 107–127, 141–161, 194–214, 218–238, and 239–259; these read TMIM…ACTK, MMPI…LGLI, FGLA…ANGV, LYGN…LINI, VFGG…VGFV, and QAFV…AHEA.

This sequence belongs to the ATPase A chain family. F-type ATPases have 2 components, CF(1) - the catalytic core - and CF(0) - the membrane proton channel. CF(1) has five subunits: alpha(3), beta(3), gamma(1), delta(1), epsilon(1). CF(0) has three main subunits: a(1), b(2) and c(9-12). The alpha and beta chains form an alternating ring which encloses part of the gamma chain. CF(1) is attached to CF(0) by a central stalk formed by the gamma and epsilon chains, while a peripheral stalk is formed by the delta and b chains.

It localises to the cell membrane. In terms of biological role, key component of the proton channel; it plays a direct role in the translocation of protons across the membrane. The chain is ATP synthase subunit a from Desulforamulus reducens (strain ATCC BAA-1160 / DSM 100696 / MI-1) (Desulfotomaculum reducens).